We begin with the raw amino-acid sequence, 795 residues long: uncharacterized protein (795 aa).

This is an uncharacterized protein from Methanocaldococcus jannaschii (strain ATCC 43067 / DSM 2661 / JAL-1 / JCM 10045 / NBRC 100440) (Methanococcus jannaschii).